Consider the following 265-residue polypeptide: MDPAPTLAAELWRTPYLGGGGGGGGGGRGLEAAASGVTEQSNGSRGGGGGGGAGRRRQREAPALEDDSSRIVSTSGGGGGGQDLTDSEAKRFKASKSSGDNSSLRTEAETDSRNASKSGDQNPPPPEPPKQDYIHVRARRGQATDSHSLAERARREKISERMKILQDLVPGCNKVIGKASVLDEIINYIQALQRQVEFLSMKLEAVNAHVNNGIEAFPPKDFGAQVYNTAPGLTFDPQTPREYAQGSTPSEWLHMQIGGTYERVT.

The tract at residues 1 to 132 (MDPAPTLAAE…PPPPEPPKQD (132 aa)) is disordered. Gly residues-rich tracts occupy residues 17–29 (LGGG…GGRG) and 44–53 (SRGGGGGGGA). Positions 95-105 (SKSSGDNSSLR) are enriched in polar residues. A basic motif; degenerate region spans residues 142-155 (QATDSHSLAERARR). The bHLH domain occupies 142–192 (QATDSHSLAERARREKISERMKILQDLVPGCNKVIGKASVLDEIINYIQAL). A helix-loop-helix motif region spans residues 156-192 (EKISERMKILQDLVPGCNKVIGKASVLDEIINYIQAL).

Belongs to the bHLH protein family. As to quaternary structure, interacts with RSS3.

It localises to the nucleus. Functionally, transcription factor that may regulate jasmonate-regulated genes. The polypeptide is Transcription factor BHLH089 (Oryza sativa subsp. japonica (Rice)).